The primary structure comprises 110 residues: Thiosulfate sulfurtransferase GlpE (110 aa).

Residues 19-107 (EDSLAVLVDI…WRRQALPIIQ (89 aa)) form the Rhodanese domain. Catalysis depends on Cys-67, which acts as the Cysteine persulfide intermediate.

This sequence belongs to the GlpE family.

It localises to the cytoplasm. It carries out the reaction thiosulfate + hydrogen cyanide = thiocyanate + sulfite + 2 H(+). The catalysed reaction is thiosulfate + [thioredoxin]-dithiol = [thioredoxin]-disulfide + hydrogen sulfide + sulfite + 2 H(+). In terms of biological role, transferase that catalyzes the transfer of sulfur from thiosulfate to thiophilic acceptors such as cyanide or dithiols. May function in a CysM-independent thiosulfate assimilation pathway by catalyzing the conversion of thiosulfate to sulfite, which can then be used for L-cysteine biosynthesis. This is Thiosulfate sulfurtransferase GlpE from Photobacterium profundum (strain SS9).